Consider the following 733-residue polypeptide: Leucine-rich repeat neuronal protein 4 (733 aa).

The signal sequence occupies residues 1-19 (MRWTLMLQLLQLLLQLLMA). At 20-676 (QSQSLERISQ…CATFTTKPSS (657 aa)) the chain is on the extracellular side. LRR repeat units lie at residues 62 to 82 (GVTTLNLANRSLESLPSCLPR), 83 to 106 (TLRSLDGSHNLLRALSEPVLGRLP), 107 to 128 (ELRVLTLHHNRISVLHWGRDTL), 130 to 151 (ELRELDLSHNLLTELPPCAGPS), 154 to 175 (SLRSLALAGNPLRALLPRTFAC), 178 to 199 (ALRLLNLSCSELGHIAQEAFAG), 207 to 230 (ALELLDLSGTSLERVESGWIRNLP), 231 to 253 (KLKSLFLRKMPRLKTLEGDIFKM), 256 to 278 (NLRQLDCGDSPALTSVHTEIFQD), and 281 to 302 (NLQVLQFQNCNLSSFGPWNSSQ). Residue Asn-70 is glycosylated (N-linked (GlcNAc...) asparagine). N-linked (GlcNAc...) asparagine glycosylation is present at Asn-183. 5 N-linked (GlcNAc...) asparagine glycosylation sites follow: Asn-291, Asn-299, Asn-327, Asn-408, and Asn-469. The 54-residue stretch at 311–364 (NPLICSCELAWLLVDVNKTVLHRAADTMCEPALGSTGPFSGPLSLSHLSNVCRS) folds into the LRRCT domain. Positions 395 to 423 (STALSAQPGGSQQNITKVPSLTMTSPTQG) are disordered. A disordered region spans residues 480–518 (KYLEPLPTSPNPRSLPQTKQRTQATPRALHTDPPQDEIP). A compositionally biased stretch (polar residues) spans 490 to 504 (NPRSLPQTKQRTQAT). The region spanning 576–675 (TPDPPTLQGV…SCATFTTKPS (100 aa)) is the Fibronectin type-III domain. Asn-619 is a glycosylation site (N-linked (GlcNAc...) asparagine). Residues 677 to 697 (VVIFWGLCTASGLLLVSTLVL) traverse the membrane as a helical segment. At 698-733 (SVCLWRQRWKPHRQFYDTHLVAFKNPARAEEVTQWE) the chain is on the cytoplasmic side.

It localises to the membrane. May play an important role in hippocampus-dependent long-lasting memory. This is Leucine-rich repeat neuronal protein 4 (Lrrn4) from Mus musculus (Mouse).